Reading from the N-terminus, the 547-residue chain is Cilia- and flagella- associated protein 210 (547 aa).

A coiled-coil region spans residues 184–254 (KLNVEKAFKE…EIEMKKKQGK (71 aa)). The tract at residues 210–237 (KDHLKQIKEHEEEEERRRKEEEKDAEEI) is disordered.

Microtubule inner protein component of sperm flagellar doublet microtubules. Expressed in trachea multiciliated cells.

It localises to the cytoplasm. It is found in the cytoskeleton. The protein localises to the cilium axoneme. The protein resides in the flagellum axoneme. Its function is as follows. Microtubule inner protein (MIP) part of the dynein-decorated doublet microtubules (DMTs) in cilia axoneme, which is required for motile cilia beating. This chain is Cilia- and flagella- associated protein 210 (CFAP210), found in Bos taurus (Bovine).